The chain runs to 814 residues: MMILSILATVVLLGALFYHRVSLFISSLILLAWTAALGVAGLWSAWVLVPLAIILVPFNFAPMRKSMISAPVFRGFRKVMPPMSRTEKEAIDAGTTWWEGDLFQGKPDWKKLHNYPQPRLTAEEQAFLDGPVEEACRMANDFQITHELADLPPELWAYLKEHRFFAMIIKKEYGGLEFSAYAQSRVLQKLSGVSGILAITVGVPNSLGPGELLQHYGTDEQKDHYLPRLARGQEIPCFALTSPEAGSDAGAIPDTGIVCMGEWQGQQVLGMRLTWNKRYITLAPIATVLGLAFKLSDPEKLLGGAEDLGITCALIPTTTPGVEIGRRHFPLNVPFQNGPTLGKDVFVPIDYIIGGPKMAGQGWRMLVECLSVGRGITLPSNSTGGVKSVALATGAYAHIRRQFKISIGKMEGIEEPLARIAGNAYVMDAAASLITYGIMLGEKPAVLSAIVKYHCTHRGQQSIIDAMDITGGKGIMLGQSNFLARAYQGAPIAITVEGANILTRSMMIFGQGAIRCHPYVLEEMEAAKNNDVNVFDKLLFKHIGHVGSNKVRSFWLGLTRGLTSSTPTGDATKRYYQHLNRLSANLALLSDVSMAVLGGSLKRRERISARLGDILSQLYLASAVLKRYDDEGRNEADLPLVHWGVQDALYQAEQAMDDLLQNFPNRVVAGLLNVVIFPTGRHYLAPSDKLDHKVAKILQVPNATRSRIGRGQYLTPSEHNPVGLLEEALVDVIAADPIHQRICKELGKNLPFTRLDELAHNALAKGLIDKDEAAILVKAEESRLRSINVDDFDPEELATKPVKLPEKVRKVEAA.

The active-site Proton acceptor is the Glu-497.

It belongs to the acyl-CoA dehydrogenase family. It depends on FAD as a cofactor.

The catalysed reaction is a medium-chain 2,3-saturated fatty acyl-CoA + oxidized [electron-transfer flavoprotein] + H(+) = a medium-chain (2E)-enoyl-CoA + reduced [electron-transfer flavoprotein]. The enzyme catalyses a long-chain 2,3-saturated fatty acyl-CoA + oxidized [electron-transfer flavoprotein] + H(+) = a long-chain (2E)-enoyl-CoA + reduced [electron-transfer flavoprotein]. The protein operates within lipid metabolism; fatty acid beta-oxidation. Its function is as follows. Catalyzes the dehydrogenation of acyl-coenzymes A (acyl-CoAs) to 2-enoyl-CoAs, the first step of the beta-oxidation cycle of fatty acid degradation. Is required for the utilization of medium- and long-chain fatty acids as sole carbon sources for growth. The polypeptide is Acyl-coenzyme A dehydrogenase (fadE) (Escherichia coli O157:H7).